A 73-amino-acid chain; its full sequence is MKANIHPDYHTIKVVMTDGTEYETRSTWGSEGATMNLEIDSKSHPAWTGGNQQLMDRGGRVSKFNKRFGSLGV.

It belongs to the bacterial ribosomal protein bL31 family. Type A subfamily. In terms of assembly, part of the 50S ribosomal subunit.

Binds the 23S rRNA. This chain is Large ribosomal subunit protein bL31, found in Rhizobium rhizogenes (strain K84 / ATCC BAA-868) (Agrobacterium radiobacter).